A 249-amino-acid polypeptide reads, in one-letter code: Probable transcriptional regulatory protein LIC_12886 (249 aa).

This sequence belongs to the TACO1 family.

The protein localises to the cytoplasm. The sequence is that of Probable transcriptional regulatory protein LIC_12886 from Leptospira interrogans serogroup Icterohaemorrhagiae serovar copenhageni (strain Fiocruz L1-130).